The primary structure comprises 346 residues: Tubulin-specific chaperone C (346 aa).

Residue Met1 is modified to N-acetylmethionine. The segment at 1 to 26 (MESVSCSAAAVRTGDMESQRDLSLVP) is disordered. 2 positions are modified to phosphoserine: Ser80 and Ser168. The disordered stretch occupies residues 140 to 171 (KTRGKDAASSTKVDAAPGIPPAVESIQDSPLP). One can recognise a C-CAP/cofactor C-like domain in the interval 171–323 (PKKAEGDLGP…NWNDVDDFNW (153 aa)).

The protein belongs to the TBCC family. Supercomplex made of cofactors A to E. Cofactors A and D function by capturing and stabilizing tubulin in a quasi-native conformation. Cofactor E binds to the cofactor D-tubulin complex; interaction with cofactor C then causes the release of tubulin polypeptides that are committed to the native state. Expressed in the retina. Expressed in the rod and cone photoreceptors, extending from the inner segments (IS), through the outer nuclear layer (ONL) and into the synapses in the outer plexiform layer (OPL). Strongly expressed to the photoreceptor connecting cilium at the tips of the IS (at protein level).

It is found in the cytoplasm. Functionally, tubulin-folding protein; involved in the final step of the tubulin folding pathway. This Homo sapiens (Human) protein is Tubulin-specific chaperone C (TBCC).